The primary structure comprises 210 residues: Protein GET1 (210 aa).

The Lumenal portion of the chain corresponds to 1–4 (MPSL). The helical transmembrane segment at 5 to 24 (LIIVLIIHVVTYLINTIGAN) threads the bilayer. At 25–110 (TIDSLLWLLY…SFDLAVKSVR (86 aa)) the chain is on the cytoplasmic side. The stretch at 39–95 (NQTSQTADEQRRLKREVMQLKREMNATSSQDEFAKWAKLRRRHDKTMEEYEAKNKAL) forms a coiled coil. The helical transmembrane segment at 111–131 (FFSTTGLKLFLQFWFSKTPIF) threads the bilayer. Topologically, residues 132-155 (ELPRGWIPWQVEWVLSFPRAPLGT) are lumenal. The helical transmembrane segment at 156-172 (VSIQIWGGVCATVVSLA) threads the bilayer. At 173 to 210 (GDAIGVVNVYLTSKAPKQKEPATSGENSARPMAIKKEL) the chain is on the cytoplasmic side. Positions 189–210 (KQKEPATSGENSARPMAIKKEL) are disordered.

This sequence belongs to the WRB/GET1 family. In terms of assembly, interacts with GET3.

It is found in the endoplasmic reticulum membrane. Required for the post-translational delivery of tail-anchored (TA) proteins to the endoplasmic reticulum. Acts as a membrane receptor for soluble GET3, which recognizes and selectively binds the transmembrane domain of TA proteins in the cytosol. This chain is Protein GET1, found in Coccidioides posadasii (strain C735) (Valley fever fungus).